A 243-amino-acid chain; its full sequence is Uba3-binding protein but1 (243 aa).

A disordered region spans residues lysine 28–lysine 50.

As to quaternary structure, homodimer. Interacts with but2 and uba3.

It localises to the nucleus. Functionally, acts as a negative regulator of the NEDD8 pathway. Has a role in meiosis. The polypeptide is Uba3-binding protein but1 (but1) (Schizosaccharomyces pombe (strain 972 / ATCC 24843) (Fission yeast)).